The primary structure comprises 718 residues: MPTEGSTVDTLTIEEAAAELARLAKEIAHHDALYHGKDQPEISDADYDALKRRNDALEVRFPELIREDSPSRHVGAAPSVTFSPVVHARPMLSLDNTFSQEDVQDFVAGVYRFLGRLPDQSIAFTAEPKIDGLSMSIRYENGRLVTAATRGDGTTGENVTANIRTIAEIPNELPKGVPAVVEIRGEVYMAKSDFLALNRQMEAEGKQTYVNPRNTAAGSLRQLDAKVTASRKLKFFAYAWGEMSEMPADTQFGMVQTFKDWGFPVNPLMKRLNSVADILAHYDEIGLERPDLDYDIDGVVYKVDSLELQARLGFRSRSPRWATAHKFPAEQAFTIVENIDIQVGRTGALTPVARLTPITVGGVVVTNATLHNADYIQGIGNSGERIRDDEHDIRIGDTVIVQRAGDVIPQVLDVVMEKRPAEARPYEFPKTCPVCGSHAVRERHEKTGKLDSVTRCTGGFICRAQATEHLKHFVSRNAFDIEGLGSKQIDFFFENEDASLQIRTAPDIFTLEKRQQQSLTKLENIDGFGKVSVGKLYGAIDERRSIALHRFIYALGIRHVGETTAKLLARSYGTYEAFETAMREAEALSGDAWNDLNAIEGIGEVVARAIVEFYKEPRNVEVITRLLEEVTPEEAEQPKTAGSPVAGKTVVFTGSLEKLTRDEAKARAESLGAKVAGSVSKKTDIVVAGPGAGSKLDKARELGVQTMDEDQWLALISG.

Residues 44–48, 93–94, and glutamate 127 each bind NAD(+); these read DADYD and SL. Lysine 129 acts as the N6-AMP-lysine intermediate in catalysis. Residues arginine 150, glutamate 186, lysine 302, and lysine 326 each contribute to the NAD(+) site. Residues cysteine 432, cysteine 435, cysteine 456, and cysteine 462 each contribute to the Zn(2+) site. The region spanning 640 to 718 is the BRCT domain; that stretch reads TAGSPVAGKT…EDQWLALISG (79 aa).

Belongs to the NAD-dependent DNA ligase family. LigA subfamily. Requires Mg(2+) as cofactor. It depends on Mn(2+) as a cofactor.

The catalysed reaction is NAD(+) + (deoxyribonucleotide)n-3'-hydroxyl + 5'-phospho-(deoxyribonucleotide)m = (deoxyribonucleotide)n+m + AMP + beta-nicotinamide D-nucleotide.. Functionally, DNA ligase that catalyzes the formation of phosphodiester linkages between 5'-phosphoryl and 3'-hydroxyl groups in double-stranded DNA using NAD as a coenzyme and as the energy source for the reaction. It is essential for DNA replication and repair of damaged DNA. The protein is DNA ligase of Rhizobium johnstonii (strain DSM 114642 / LMG 32736 / 3841) (Rhizobium leguminosarum bv. viciae).